The following is an 86-amino-acid chain: Mu-theraphotoxin-Hhn1c (86 aa).

The signal sequence occupies residues 1 to 21; sequence MKASMFLALAGLALLFVVCYA. A propeptide spanning residues 22–49 is cleaved from the precursor; the sequence is SESEEKEFSNELLSSVLAVDDNSKGEER. 3 disulfide bridges follow: C51/C66, C58/C73, and C65/C80. At I84 the chain carries Isoleucine amide.

This sequence belongs to the neurotoxin 10 (Hwtx-1) family. 22 (Htx-4) subfamily. As to quaternary structure, monomer. Expressed by the venom gland.

The protein localises to the secreted. In terms of biological role, neurotoxin. Selectively blocks neuronal tetrodotoxin-sensitive voltage-gated sodium channels (Nav). Does not affect tetrodotoxin-resistant voltage-gated sodium channels or calcium channels. This is Mu-theraphotoxin-Hhn1c from Cyriopagopus hainanus (Chinese bird spider).